The chain runs to 506 residues: Bifunctional purine biosynthesis protein PurH (506 aa).

The MGS-like domain maps to M1–C146.

It belongs to the PurH family.

It carries out the reaction (6R)-10-formyltetrahydrofolate + 5-amino-1-(5-phospho-beta-D-ribosyl)imidazole-4-carboxamide = 5-formamido-1-(5-phospho-D-ribosyl)imidazole-4-carboxamide + (6S)-5,6,7,8-tetrahydrofolate. The enzyme catalyses IMP + H2O = 5-formamido-1-(5-phospho-D-ribosyl)imidazole-4-carboxamide. It participates in purine metabolism; IMP biosynthesis via de novo pathway; 5-formamido-1-(5-phospho-D-ribosyl)imidazole-4-carboxamide from 5-amino-1-(5-phospho-D-ribosyl)imidazole-4-carboxamide (10-formyl THF route): step 1/1. The protein operates within purine metabolism; IMP biosynthesis via de novo pathway; IMP from 5-formamido-1-(5-phospho-D-ribosyl)imidazole-4-carboxamide: step 1/1. This chain is Bifunctional purine biosynthesis protein PurH, found in Nostoc sp. (strain PCC 7120 / SAG 25.82 / UTEX 2576).